The following is a 194-amino-acid chain: dTTP/UTP pyrophosphatase (194 aa).

The active-site Proton acceptor is the aspartate 76.

Belongs to the Maf family. YhdE subfamily. It depends on a divalent metal cation as a cofactor.

It is found in the cytoplasm. The catalysed reaction is dTTP + H2O = dTMP + diphosphate + H(+). It catalyses the reaction UTP + H2O = UMP + diphosphate + H(+). Nucleoside triphosphate pyrophosphatase that hydrolyzes dTTP and UTP. May have a dual role in cell division arrest and in preventing the incorporation of modified nucleotides into cellular nucleic acids. This is dTTP/UTP pyrophosphatase from Shewanella oneidensis (strain ATCC 700550 / JCM 31522 / CIP 106686 / LMG 19005 / NCIMB 14063 / MR-1).